Here is a 192-residue protein sequence, read N- to C-terminus: NF-kappa-B inhibitor-interacting Ras-like protein 1 (192 aa).

Position 11–18 (Gly11–Thr18) interacts with GTP. An Effector region motif is present at residues Asp35 to Tyr43. An interactions with NFKBIA and NFKBIB region spans residues His58–Ser93. GTP is bound by residues Asp61–Leu65 and Asn120–Asp123. The interval Leu168–Asn192 is disordered.

This sequence belongs to the small GTPase superfamily. Ras family. KappaB-Ras subfamily. As to quaternary structure, interacts with both NF-kappa-B inhibitor alpha (NFKBIA) and beta (NFKBIB) in vitro. However, it probably only interacts with NFKBIB in vivo. Forms a complex with NFKBIB and NF-kappa-B heterodimer (p50/NFKB1 and p65/RELA). Also interacts with c-Rel (REL). Widely expressed.

Its subcellular location is the cytoplasm. In terms of biological role, atypical Ras-like protein that acts as a potent regulator of NF-kappa-B activity by preventing the degradation of NF-kappa-B inhibitor beta (NFKBIB) by most signals, explaining why NFKBIB is more resistant to degradation. May act by blocking phosphorylation of NFKBIB and mediating cytoplasmic retention of p65/RELA NF-kappa-B subunit. It is unclear whether it acts as a GTPase. Both GTP- and GDP-bound forms block phosphorylation of NFKBIB. The chain is NF-kappa-B inhibitor-interacting Ras-like protein 1 (NKIRAS1) from Homo sapiens (Human).